The primary structure comprises 249 residues: MNEKIRSQSVLNTLETFFIKENHYDMQREESSIVNACLRYLGYSKSMCHEKMPIFMDIAFIEYCFNLSLDPSSFQNLPITQTQPDSQQILWEYSLISNALERLENIELERQNCMREDGLVKYTNELLLNKETLNNEALKLYSCAKAGICRWMAFHFLEQEPIDHINFTKFLQDWGSHNEKEMEALQRLSKHKIRKRLIYVSQHKKKMPWSKFNSVLSRYIQCTKLQLEVFCDYDFKQREIVKMLTSNIN.

In terms of assembly, interacts with pot1, rap1 and tpz1.

The protein localises to the cytoplasm. The protein resides in the nucleus. It is found in the chromosome. It localises to the telomere. In terms of biological role, telomeric DNA-binding protein that negatively regulates telomerase and telomere length. The protein is Protection of telomeres protein poz1 (poz1) of Schizosaccharomyces pombe (strain 972 / ATCC 24843) (Fission yeast).